The following is a 420-amino-acid chain: Tyrosine--tRNA ligase (420 aa).

An L-tyrosine-binding site is contributed by tyrosine 33. The 'HIGH' region motif lies at 38–47 (PTADSLHIGH). L-tyrosine contacts are provided by tyrosine 168 and glutamine 172. Positions 231–235 (KFGKT) match the 'KMSKS' region motif. Lysine 234 provides a ligand contact to ATP. Residues 353–419 (MLLVDALIKV…GKKNYYLVKL (67 aa)) form the S4 RNA-binding domain.

The protein belongs to the class-I aminoacyl-tRNA synthetase family. TyrS type 1 subfamily. As to quaternary structure, homodimer.

It is found in the cytoplasm. It carries out the reaction tRNA(Tyr) + L-tyrosine + ATP = L-tyrosyl-tRNA(Tyr) + AMP + diphosphate + H(+). Catalyzes the attachment of tyrosine to tRNA(Tyr) in a two-step reaction: tyrosine is first activated by ATP to form Tyr-AMP and then transferred to the acceptor end of tRNA(Tyr). This chain is Tyrosine--tRNA ligase, found in Desulfitobacterium hafniense (strain DSM 10664 / DCB-2).